The following is a 152-amino-acid chain: Synaptobrevin (152 aa).

The span at 1 to 16 (MENNEAPSPSGSNNND) shows a compositional bias: polar residues. The disordered stretch occupies residues 1–30 (MENNEAPSPSGSNNNDFPILPPPPNANDNY). Topologically, residues 1–110 (MENNEAPSPS…KRKQWWANMK (110 aa)) are cytoplasmic. A v-SNARE coiled-coil homology domain is found at 47 to 107 (KLQQTQAKVD…GKLKRKQWWA (61 aa)). A helical; Anchor for type IV membrane protein transmembrane segment spans residues 111 to 130 (MMIILGVIAVVLLIIVLVSV). Residues 131 to 152 (WPSSSDSGSGGGNKAITQAPPH) are Vesicular-facing. The disordered stretch occupies residues 133-152 (SSSDSGSGGGNKAITQAPPH).

It belongs to the synaptobrevin family. In terms of assembly, part of the SNARE core complex containing Snap25 and syntaxin. Post-translationally, ubiquitinated by gzl, regulating endocytic trafficking. In wing imaginal disks, ubiquitination by gzl promotes transcytosis of wingless (wg) to the basolateral surface. Not nervous system-specific; abundant in cells of the gut and Malpighian tubules.

Its subcellular location is the cytoplasmic vesicle. It localises to the secretory vesicle. The protein resides in the synaptic vesicle membrane. It is found in the cell membrane. Functionally, involved in the targeting and/or fusion of transport vesicles to their target membrane. This chain is Synaptobrevin, found in Drosophila melanogaster (Fruit fly).